A 79-amino-acid chain; its full sequence is Acyl carrier protein (79 aa).

The Carrier domain occupies 2 to 77 (SDIEQRVKKI…QAIDYAKAHV (76 aa)). Ser37 carries the post-translational modification O-(pantetheine 4'-phosphoryl)serine.

Belongs to the acyl carrier protein (ACP) family. 4'-phosphopantetheine is transferred from CoA to a specific serine of apo-ACP by AcpS. This modification is essential for activity because fatty acids are bound in thioester linkage to the sulfhydryl of the prosthetic group.

Its subcellular location is the cytoplasm. Its pathway is lipid metabolism; fatty acid biosynthesis. Its function is as follows. Carrier of the growing fatty acid chain in fatty acid biosynthesis. The sequence is that of Acyl carrier protein from Janthinobacterium sp. (strain Marseille) (Minibacterium massiliensis).